The chain runs to 313 residues: MTQSSNQTKDRVQRLGKVAVLMGGVAAERDVSLRSGAEVLKALKSEGVDAVGCDVTSVAQLVEIAQKYDRAFIALHGRWGEDGGVQAVLDSLALPYTGSGMTASALAMDKLRTKWLWKGVGLPTPAFIVVSPSRPLDVETFDLTFPVIVKPSHEGSSIGMRKVDTLDALQEAVDFAQQYDSEILIEQWITGREFTCAVLDGEALPMIQLKTDHDFYDFDAKYQSNTTEYLCPCGLEIAEEKRIQALVLQAFDAVGARHWGRVDLMLDDQNQPWLIEINTVPGMTDHSLVPMAAKAVDLSFSKLVLKLISLTLP.

The region spanning 114 to 309 (KWLWKGVGLP…FSKLVLKLIS (196 aa)) is the ATP-grasp domain. An ATP-binding site is contributed by 142-195 (DLTFPVIVKPSHEGSSIGMRKVDTLDALQEAVDFAQQYDSEILIEQWITGREFT). The Mg(2+) site is built by Asp-263, Glu-276, and Asn-278.

It belongs to the D-alanine--D-alanine ligase family. Mg(2+) is required as a cofactor. It depends on Mn(2+) as a cofactor.

Its subcellular location is the cytoplasm. The catalysed reaction is 2 D-alanine + ATP = D-alanyl-D-alanine + ADP + phosphate + H(+). Its pathway is cell wall biogenesis; peptidoglycan biosynthesis. Functionally, cell wall formation. This Hydrogenovibrio crunogenus (strain DSM 25203 / XCL-2) (Thiomicrospira crunogena) protein is D-alanine--D-alanine ligase.